Reading from the N-terminus, the 69-residue chain is Conotoxin Gla-TxXI (69 aa).

The signal sequence occupies residues 1-25 (MVRVTSVGCFLLVIVSLNLVVLTNA). 4 cysteine pairs are disulfide-bonded: cysteine 26/cysteine 40, cysteine 33/cysteine 45, cysteine 39/cysteine 49, and cysteine 44/cysteine 53. Position 29 is a 4-carboxyglutamate (glutamate 29). Residue proline 56 is modified to Proline amide. Residues 60-69 (AKLLEFFRQR) constitute a propeptide that is removed on maturation.

Post-translationally, contains 4 disulfide bonds. As to expression, expressed by the venom duct.

Its subcellular location is the secreted. The polypeptide is Conotoxin Gla-TxXI (Conus textile (Cloth-of-gold cone)).